The primary structure comprises 229 residues: Cytidylate kinase (229 aa).

Residue 12 to 20 (GPSGTGKSS) coordinates ATP.

It belongs to the cytidylate kinase family. Type 1 subfamily.

It is found in the cytoplasm. The catalysed reaction is CMP + ATP = CDP + ADP. The enzyme catalyses dCMP + ATP = dCDP + ADP. This is Cytidylate kinase from Rhodococcus jostii (strain RHA1).